We begin with the raw amino-acid sequence, 396 residues long: Gap junction gamma-1 protein (396 aa).

Residues 1 to 22 (MSWSFLTRLLEEIHNHSTFVGK) lie on the Cytoplasmic side of the membrane. The chain crosses the membrane as a helical span at residues 23–45 (IWLTVLIVFRIVLTAVGGESIYY). Over 46-75 (DEQSKFVCNTEQPGCENVCYDAFAPLSHVR) the chain is Extracellular. A helical transmembrane segment spans residues 76–95 (FWVFQIILVATPSVMYLGYA). The Cytoplasmic segment spans residues 96-175 (IHKIAKMEHG…RRIREDGLMK (80 aa)). Positions 146–165 (LESEKENKDQNQSKPKHDGR) are disordered. Positions 147–156 (ESEKENKDQN) are enriched in basic and acidic residues. A helical transmembrane segment spans residues 176-198 (IYVLQLLARTVFEVGFLVGQYFL). Over 199–228 (YGFQVHPFYVCSRLPCPHKIDCFISRPTEK) the chain is Extracellular. The chain crosses the membrane as a helical span at residues 229–248 (TIFLLIMYGVTGLCLLLNIW). Residues 249–396 (EMLHLGFGTI…SGDGKTSVWI (148 aa)) lie on the Cytoplasmic side of the membrane. The tract at residues 356–396 (YNHQNNPHGSREKKAKVGSKAGSNKSSASSKSGDGKTSVWI) is disordered. Positions 373–396 (GSKAGSNKSSASSKSGDGKTSVWI) are enriched in low complexity.

This sequence belongs to the connexin family. Gamma-type subfamily. In terms of assembly, a connexon is composed of a hexamer of connexins. Interacts with CNST.

It localises to the cell membrane. It is found in the cell junction. Its subcellular location is the gap junction. One gap junction consists of a cluster of closely packed pairs of transmembrane channels, the connexons, through which materials of low MW diffuse from one cell to a neighboring cell. The sequence is that of Gap junction gamma-1 protein (GJC1) from Bos taurus (Bovine).